A 416-amino-acid chain; its full sequence is Serine hydroxymethyltransferase (416 aa).

Residues Leu118 and 122 to 124 (GHL) contribute to the (6S)-5,6,7,8-tetrahydrofolate site. Lys226 carries the N6-(pyridoxal phosphate)lysine modification. (6S)-5,6,7,8-tetrahydrofolate is bound at residue 350–352 (SPF).

The protein belongs to the SHMT family. In terms of assembly, homodimer. It depends on pyridoxal 5'-phosphate as a cofactor.

The protein localises to the cytoplasm. The enzyme catalyses (6R)-5,10-methylene-5,6,7,8-tetrahydrofolate + glycine + H2O = (6S)-5,6,7,8-tetrahydrofolate + L-serine. Its pathway is one-carbon metabolism; tetrahydrofolate interconversion. The protein operates within amino-acid biosynthesis; glycine biosynthesis; glycine from L-serine: step 1/1. Catalyzes the reversible interconversion of serine and glycine with tetrahydrofolate (THF) serving as the one-carbon carrier. This reaction serves as the major source of one-carbon groups required for the biosynthesis of purines, thymidylate, methionine, and other important biomolecules. Also exhibits THF-independent aldolase activity toward beta-hydroxyamino acids, producing glycine and aldehydes, via a retro-aldol mechanism. This Sulfurovum sp. (strain NBC37-1) protein is Serine hydroxymethyltransferase.